Reading from the N-terminus, the 339-residue chain is UDP-N-acetylenolpyruvoylglucosamine reductase (339 aa).

An FAD-binding PCMH-type domain is found at Gly-16–Gln-188. Residue Arg-164 is part of the active site. The Proton donor role is filled by Ser-238. Glu-334 is a catalytic residue.

Belongs to the MurB family. FAD is required as a cofactor.

The protein localises to the cytoplasm. The enzyme catalyses UDP-N-acetyl-alpha-D-muramate + NADP(+) = UDP-N-acetyl-3-O-(1-carboxyvinyl)-alpha-D-glucosamine + NADPH + H(+). It functions in the pathway cell wall biogenesis; peptidoglycan biosynthesis. Cell wall formation. In Amoebophilus asiaticus (strain 5a2), this protein is UDP-N-acetylenolpyruvoylglucosamine reductase.